Here is a 388-residue protein sequence, read N- to C-terminus: Xylose isomerase (388 aa).

Catalysis depends on residues His54 and Asp57. Positions 181, 217, 220, 245, 255, 257, and 287 each coordinate Mg(2+).

It belongs to the xylose isomerase family. Homotetramer. Mg(2+) serves as cofactor.

It is found in the cytoplasm. The catalysed reaction is alpha-D-xylose = alpha-D-xylulofuranose. The protein is Xylose isomerase of Streptomyces avermitilis (strain ATCC 31267 / DSM 46492 / JCM 5070 / NBRC 14893 / NCIMB 12804 / NRRL 8165 / MA-4680).